The following is a 664-amino-acid chain: Threonine--tRNA ligase (664 aa).

One can recognise a TGS domain in the interval 1-64; the sequence is MSELLKITLP…TADAQLALVT (64 aa). The segment at 250–559 is catalytic; it reads DHRKLGNEMD…LIEHFAGRLP (310 aa). 3 residues coordinate Zn(2+): cysteine 355, histidine 406, and histidine 536.

This sequence belongs to the class-II aminoacyl-tRNA synthetase family. In terms of assembly, homodimer. Zn(2+) serves as cofactor.

The protein resides in the cytoplasm. The enzyme catalyses tRNA(Thr) + L-threonine + ATP = L-threonyl-tRNA(Thr) + AMP + diphosphate + H(+). Functionally, catalyzes the attachment of threonine to tRNA(Thr) in a two-step reaction: L-threonine is first activated by ATP to form Thr-AMP and then transferred to the acceptor end of tRNA(Thr). Also edits incorrectly charged L-seryl-tRNA(Thr). This is Threonine--tRNA ligase from Novosphingobium aromaticivorans (strain ATCC 700278 / DSM 12444 / CCUG 56034 / CIP 105152 / NBRC 16084 / F199).